We begin with the raw amino-acid sequence, 140 residues long: 3-hydroxyacyl-[acyl-carrier-protein] dehydratase FabZ (140 aa).

The active site involves His48.

The protein belongs to the thioester dehydratase family. FabZ subfamily.

Its subcellular location is the cytoplasm. It catalyses the reaction a (3R)-hydroxyacyl-[ACP] = a (2E)-enoyl-[ACP] + H2O. Its function is as follows. Involved in unsaturated fatty acids biosynthesis. Catalyzes the dehydration of short chain beta-hydroxyacyl-ACPs and long chain saturated and unsaturated beta-hydroxyacyl-ACPs. This is 3-hydroxyacyl-[acyl-carrier-protein] dehydratase FabZ from Pelotomaculum thermopropionicum (strain DSM 13744 / JCM 10971 / SI).